We begin with the raw amino-acid sequence, 298 residues long: Acetylglutamate kinase (298 aa).

Substrate-binding positions include 66-67, R88, and N193; that span reads GG.

It belongs to the acetylglutamate kinase family. ArgB subfamily.

The protein resides in the cytoplasm. It carries out the reaction N-acetyl-L-glutamate + ATP = N-acetyl-L-glutamyl 5-phosphate + ADP. It functions in the pathway amino-acid biosynthesis; L-arginine biosynthesis; N(2)-acetyl-L-ornithine from L-glutamate: step 2/4. Functionally, catalyzes the ATP-dependent phosphorylation of N-acetyl-L-glutamate. This is Acetylglutamate kinase from Methanosphaera stadtmanae (strain ATCC 43021 / DSM 3091 / JCM 11832 / MCB-3).